Reading from the N-terminus, the 238-residue chain is Ribosomal RNA small subunit methyltransferase G (238 aa).

S-adenosyl-L-methionine is bound by residues G77, F82, 128 to 129, and R147; that span reads AE.

Belongs to the methyltransferase superfamily. RNA methyltransferase RsmG family.

The protein resides in the cytoplasm. Functionally, specifically methylates the N7 position of guanine in position 535 of 16S rRNA. The polypeptide is Ribosomal RNA small subunit methyltransferase G (Listeria welshimeri serovar 6b (strain ATCC 35897 / DSM 20650 / CCUG 15529 / CIP 8149 / NCTC 11857 / SLCC 5334 / V8)).